A 735-amino-acid chain; its full sequence is Glycogen [starch] synthase, muscle (735 aa).

Position 8 is a phosphoserine; by AMPK and PKA (Ser-8). At Ser-11 the chain carries Phosphoserine. Lys-39 contributes to the UDP binding site. UDP-alpha-D-glucose is bound by residues His-205 and Arg-211. Alpha-D-glucose 6-phosphate contacts are provided by His-291, Glu-292, Gln-294, His-297, and Lys-301. Arg-331 lines the UDP pocket. A UDP-alpha-D-glucose-binding site is contributed by Arg-331. Phosphoserine is present on Ser-412. Alpha-D-glucose 6-phosphate is bound at residue His-501. 3 residues coordinate UDP-alpha-D-glucose: Glu-510, Trp-512, and Gly-513. Residue Thr-515 coordinates UDP. Alpha-D-glucose 6-phosphate contacts are provided by Arg-582 and Arg-586. The disordered stretch occupies residues 629-735; that stretch reads DATQGYRYPR…PASSLGEERN (107 aa). Ser-641 bears the Phosphoserine; by DYRK2, GSK3-alpha, GSK3-beta and PASK mark. Ser-645 and Ser-649 each carry phosphoserine; by GSK3-alpha and GSK3-beta. Ser-652 is modified (phosphoserine). Ser-653 is subject to Phosphoserine; by GSK3-alpha and GSK3-beta. Ser-657 is subject to Phosphoserine; by CK2. Acidic residues predominate over residues 658-681; it reads EDEEEPRDGLPEEDGERYDEDEEA. Positions 682-695 are enriched in basic and acidic residues; it reads AKDRRNIRAPEWPR. Position 698 is a phosphoserine (Ser-698). Positions 698–735 are enriched in low complexity; that stretch reads SCTSSSGGSKRSNSVDTSSLSTPSEPLSPASSLGEERN. Thr-700 bears the Phosphothreonine mark. 2 positions are modified to phosphoserine: Ser-709 and Ser-711. Residue Thr-719 is modified to Phosphothreonine. Phosphoserine occurs at positions 725 and 729.

It belongs to the glycosyltransferase 3 family. In terms of assembly, part of the GYS1-GYG1 complex, a heterooctamer composed of a tetramer of GYS1 and 2 dimers of GYG1, where each GYS1 protomer binds to one GYG1 subunit (via GYG1 C-terminus); the GYS1 tetramer may dissociate from GYG1 dimers to continue glycogen polymerization on its own. In terms of processing, phosphorylation at Ser-8 is required for modification of Ser-11 by casein kinase I. Post-translationally, phosphorylated at Ser-641 by PASK, leading to inactivation; phosphorylation by PASK is inhibited by glycogen. Dephosphorylation at Ser-641 and Ser-645 by PP1 activates the enzyme. Phosphorylation at Ser-8 by AMPK inactivates the enzyme activity. Phosphorylated at Ser-641 by DYRK2, leading to inactivation. Primed phosphorylation at Ser-657 (site 5) by CSNK2A1 and CSNK2A2 is required for inhibitory phosphorylation at Ser-641 (site 3a), Ser-645 (site 3b), Ser-649 (site 3c) and Ser-653 (site 4) by GSK3A and GSK3B.

It carries out the reaction [(1-&gt;4)-alpha-D-glucosyl](n) + UDP-alpha-D-glucose = [(1-&gt;4)-alpha-D-glucosyl](n+1) + UDP + H(+). It participates in glycan biosynthesis; glycogen biosynthesis. With respect to regulation, allosteric activation by glucose-6-phosphate. Phosphorylation reduces the activity towards UDP-glucose. When in the non-phosphorylated state, glycogen synthase does not require glucose-6-phosphate as an allosteric activator; when phosphorylated it does. Functionally, glycogen synthase participates in the glycogen biosynthetic process along with glycogenin and glycogen branching enzyme. Extends the primer composed of a few glucose units formed by glycogenin by adding new glucose units to it. In this context, glycogen synthase transfers the glycosyl residue from UDP-Glc to the non-reducing end of alpha-1,4-glucan. This is Glycogen [starch] synthase, muscle from Oryctolagus cuniculus (Rabbit).